The primary structure comprises 271 residues: Cobalt import ATP-binding protein CbiO (271 aa).

The ABC transporter domain occupies Leu-2–Thr-236. Gly-34–Ser-41 contributes to the ATP binding site.

Belongs to the ABC transporter superfamily. Cobalt importer (TC 3.A.1.18.1) family. Forms an energy-coupling factor (ECF) transporter complex composed of an ATP-binding protein (A component, CbiO), a transmembrane protein (T component, CbiQ) and 2 possible substrate-capture proteins (S components, CbiM and CbiN) of unknown stoichimetry.

It localises to the cell inner membrane. It participates in cofactor biosynthesis; adenosylcobalamin biosynthesis. Part of the energy-coupling factor (ECF) transporter complex CbiMNOQ involved in cobalt import. Presumably responsible for energy coupling to the transport system. In Salmonella paratyphi A (strain ATCC 9150 / SARB42), this protein is Cobalt import ATP-binding protein CbiO.